We begin with the raw amino-acid sequence, 173 residues long: Co-chaperone protein HscB homolog (173 aa).

The 73-residue stretch at 5-77 (CHFALFELKP…PKRARYLLAM (73 aa)) folds into the J domain.

It belongs to the HscB family. As to quaternary structure, interacts with HscA and stimulates its ATPase activity.

Its function is as follows. Co-chaperone involved in the maturation of iron-sulfur cluster-containing proteins. Seems to help targeting proteins to be folded toward HscA. This Pseudomonas syringae pv. tomato (strain ATCC BAA-871 / DC3000) protein is Co-chaperone protein HscB homolog.